Reading from the N-terminus, the 295-residue chain is Pyridoxal 5'-phosphate synthase subunit PdxS (295 aa).

Asp25 contacts D-ribose 5-phosphate. Lys82 (schiff-base intermediate with D-ribose 5-phosphate) is an active-site residue. Gly154 contributes to the D-ribose 5-phosphate binding site. Position 166 (Arg166) interacts with D-glyceraldehyde 3-phosphate. D-ribose 5-phosphate is bound by residues Gly215 and 236-237 (GS).

This sequence belongs to the PdxS/SNZ family. In terms of assembly, in the presence of PdxT, forms a dodecamer of heterodimers.

It carries out the reaction aldehydo-D-ribose 5-phosphate + D-glyceraldehyde 3-phosphate + L-glutamine = pyridoxal 5'-phosphate + L-glutamate + phosphate + 3 H2O + H(+). It participates in cofactor biosynthesis; pyridoxal 5'-phosphate biosynthesis. Its function is as follows. Catalyzes the formation of pyridoxal 5'-phosphate from ribose 5-phosphate (RBP), glyceraldehyde 3-phosphate (G3P) and ammonia. The ammonia is provided by the PdxT subunit. Can also use ribulose 5-phosphate and dihydroxyacetone phosphate as substrates, resulting from enzyme-catalyzed isomerization of RBP and G3P, respectively. In Oceanobacillus iheyensis (strain DSM 14371 / CIP 107618 / JCM 11309 / KCTC 3954 / HTE831), this protein is Pyridoxal 5'-phosphate synthase subunit PdxS.